The following is a 238-amino-acid chain: DNA repair protein RAD59 (238 aa).

Belongs to the RAD52 family. In terms of assembly, interacts with RAD51 and RAD52.

The protein resides in the nucleus. Functionally, involved in the repair of double-strand breaks in DNA during vegetative growth via recombination and single-strand annealing. Anneals complementary single-stranded DNA. In Saccharomyces cerevisiae (strain ATCC 204508 / S288c) (Baker's yeast), this protein is DNA repair protein RAD59 (RAD59).